A 65-amino-acid polypeptide reads, in one-letter code: Large ribosomal subunit protein bL32 (65 aa).

This sequence belongs to the bacterial ribosomal protein bL32 family.

In Rickettsia prowazekii (strain Madrid E), this protein is Large ribosomal subunit protein bL32 (rpmF).